Reading from the N-terminus, the 250-residue chain is UDP-2,3-diacylglucosamine hydrolase (250 aa).

Asp7, His9, Asp40, Asn78, and His113 together coordinate Mn(2+). 78-79 (NR) is a substrate binding site. Positions 121, 159, 163, 166, and 194 each coordinate substrate. 2 residues coordinate Mn(2+): His194 and His196.

It belongs to the LpxH family. It depends on Mn(2+) as a cofactor.

It is found in the cell inner membrane. The catalysed reaction is UDP-2-N,3-O-bis[(3R)-3-hydroxytetradecanoyl]-alpha-D-glucosamine + H2O = 2-N,3-O-bis[(3R)-3-hydroxytetradecanoyl]-alpha-D-glucosaminyl 1-phosphate + UMP + 2 H(+). It participates in glycolipid biosynthesis; lipid IV(A) biosynthesis; lipid IV(A) from (3R)-3-hydroxytetradecanoyl-[acyl-carrier-protein] and UDP-N-acetyl-alpha-D-glucosamine: step 4/6. In terms of biological role, hydrolyzes the pyrophosphate bond of UDP-2,3-diacylglucosamine to yield 2,3-diacylglucosamine 1-phosphate (lipid X) and UMP by catalyzing the attack of water at the alpha-P atom. Involved in the biosynthesis of lipid A, a phosphorylated glycolipid that anchors the lipopolysaccharide to the outer membrane of the cell. The polypeptide is UDP-2,3-diacylglucosamine hydrolase (Pseudomonas fluorescens (strain ATCC BAA-477 / NRRL B-23932 / Pf-5)).